The sequence spans 503 residues: ATP synthase subunit alpha (503 aa).

ATP is bound at residue Gly-169–Thr-176.

It belongs to the ATPase alpha/beta chains family. F-type ATPases have 2 components, CF(1) - the catalytic core - and CF(0) - the membrane proton channel. CF(1) has five subunits: alpha(3), beta(3), gamma(1), delta(1), epsilon(1). CF(0) has three main subunits: a(1), b(2) and c(9-12). The alpha and beta chains form an alternating ring which encloses part of the gamma chain. CF(1) is attached to CF(0) by a central stalk formed by the gamma and epsilon chains, while a peripheral stalk is formed by the delta and b chains.

The protein localises to the cell membrane. The enzyme catalyses ATP + H2O + 4 H(+)(in) = ADP + phosphate + 5 H(+)(out). Increases 2-fold following exposure to low pH. Produces ATP from ADP in the presence of a proton gradient across the membrane. The alpha chain is a regulatory subunit. This Lactobacillus acidophilus (strain ATCC 700396 / NCK56 / N2 / NCFM) protein is ATP synthase subunit alpha.